Here is a 253-residue protein sequence, read N- to C-terminus: Sulfate transporter CysZ (253 aa).

Transmembrane regions (helical) follow at residues 31–51 (FVIL…WWLF), 72–92 (LSYL…GYFF), 151–171 (IVLL…PVLW), and 222–242 (IPVL…AMWV).

The protein belongs to the CysZ family.

It localises to the cell inner membrane. Its function is as follows. High affinity, high specificity proton-dependent sulfate transporter, which mediates sulfate uptake. Provides the sulfur source for the cysteine synthesis pathway. In Salmonella paratyphi A (strain AKU_12601), this protein is Sulfate transporter CysZ.